Reading from the N-terminus, the 1127-residue chain is Disease resistance protein RPS6 (1127 aa).

Met1 is subject to N-acetylmethionine. Residues Trp12 to Met176 enclose the TIR domain. Glu87 is a catalytic residue. Residues Glu191–Lys452 form the NB-ARC domain. LRR repeat units follow at residues Met197–Lys221, Ile540–Lys563, Pro587–Pro609, Glu610–Leu632, Ala633–Thr656, Leu658–Leu679, Asn680–Ser704, Ser766–Leu790, Tyr791–Leu813, Asp814–Ser834, and Thr835–Leu857.

As to quaternary structure, interacts with EDS1. As to expression, ubiquitous.

The catalysed reaction is NAD(+) + H2O = ADP-D-ribose + nicotinamide + H(+). In terms of biological role, disease resistance (R) protein that specifically recognizes the hopA1 type III effector avirulence protein from Pseudomonas syringae. Resistance proteins guard the plant against pathogens that contain an appropriate avirulence protein via an indirect interaction with this avirulence protein. That triggers a defense system including the hypersensitive response, which restricts the pathogen growth. The protein is Disease resistance protein RPS6 (RPS6) of Arabidopsis thaliana (Mouse-ear cress).